A 170-amino-acid polypeptide reads, in one-letter code: Ureidoglycolate lyase (170 aa).

This sequence belongs to the ureidoglycolate lyase family. In terms of assembly, homodimer. Ni(2+) serves as cofactor.

It carries out the reaction (S)-ureidoglycolate = urea + glyoxylate. It participates in nitrogen metabolism; (S)-allantoin degradation. Its function is as follows. Catalyzes the catabolism of the allantoin degradation intermediate (S)-ureidoglycolate, generating urea and glyoxylate. Involved in the utilization of allantoin as nitrogen source. This Stutzerimonas stutzeri (strain A1501) (Pseudomonas stutzeri) protein is Ureidoglycolate lyase.